The following is a 325-amino-acid chain: Methionyl-tRNA formyltransferase (325 aa).

111–114 (SILP) provides a ligand contact to (6S)-5,6,7,8-tetrahydrofolate.

It belongs to the Fmt family.

The enzyme catalyses L-methionyl-tRNA(fMet) + (6R)-10-formyltetrahydrofolate = N-formyl-L-methionyl-tRNA(fMet) + (6S)-5,6,7,8-tetrahydrofolate + H(+). In terms of biological role, attaches a formyl group to the free amino group of methionyl-tRNA(fMet). The formyl group appears to play a dual role in the initiator identity of N-formylmethionyl-tRNA by promoting its recognition by IF2 and preventing the misappropriation of this tRNA by the elongation apparatus. The sequence is that of Methionyl-tRNA formyltransferase from Microcystis aeruginosa (strain NIES-843 / IAM M-2473).